The chain runs to 445 residues: Methionine aminopeptidase 2 (445 aa).

Residues 1-80 (MAAQVASGVG…TSKVQTEPPR (80 aa)) form a disordered region. A compositionally biased stretch (basic residues) spans 57 to 71 (AKKKKKKTKKKKKGT). Histidine 195 contributes to the substrate binding site. A divalent metal cation-binding residues include aspartate 215, aspartate 226, and histidine 295. Histidine 303 is a binding site for substrate. Residues glutamate 331 and glutamate 426 each contribute to the a divalent metal cation site.

Belongs to the peptidase M24A family. Methionine aminopeptidase eukaryotic type 2 subfamily. Co(2+) serves as cofactor. Requires Zn(2+) as cofactor. It depends on Mn(2+) as a cofactor. Fe(2+) is required as a cofactor.

The protein localises to the cytoplasm. The catalysed reaction is Release of N-terminal amino acids, preferentially methionine, from peptides and arylamides.. Cotranslationally removes the N-terminal methionine from nascent proteins. The N-terminal methionine is often cleaved when the second residue in the primary sequence is small and uncharged (Met-Ala-, Cys, Gly, Pro, Ser, Thr, or Val). This is Methionine aminopeptidase 2 from Paracoccidioides brasiliensis (strain Pb03).